The sequence spans 420 residues: Glucose-1-phosphate adenylyltransferase (420 aa).

Residues Y107, G173, 188–189 (EK), and S206 contribute to the alpha-D-glucose 1-phosphate site.

The protein belongs to the bacterial/plant glucose-1-phosphate adenylyltransferase family. Homotetramer.

The enzyme catalyses alpha-D-glucose 1-phosphate + ATP + H(+) = ADP-alpha-D-glucose + diphosphate. It participates in glycan biosynthesis; glycogen biosynthesis. Functionally, involved in the biosynthesis of ADP-glucose, a building block required for the elongation reactions to produce glycogen. Catalyzes the reaction between ATP and alpha-D-glucose 1-phosphate (G1P) to produce pyrophosphate and ADP-Glc. The chain is Glucose-1-phosphate adenylyltransferase from Shewanella baltica (strain OS185).